A 158-amino-acid chain; its full sequence is Regulator of G-protein signaling 13 (158 aa).

Positions 34–150 constitute an RGS domain; sequence SLESLMATKY…LKSEMYQQLL (117 aa).

Inhibits signal transduction by increasing the GTPase activity of G protein alpha subunits thereby driving them into their inactive GDP-bound form. Binds to both G(i)-alpha and G(q)-alpha. This is Regulator of G-protein signaling 13 (Rgs13) from Mus musculus (Mouse).